The primary structure comprises 278 residues: Large ribosomal subunit protein uL2 (278 aa).

Residues 223 to 278 (RGSAMNPNDHPHGGGEGKAPVGRKAPMTPWGKKALGVKTRNKKKASTKLIVRRRTK) form a disordered region. Residues 261–278 (TRNKKKASTKLIVRRRTK) are compositionally biased toward basic residues.

It belongs to the universal ribosomal protein uL2 family. In terms of assembly, part of the 50S ribosomal subunit. Forms a bridge to the 30S subunit in the 70S ribosome.

In terms of biological role, one of the primary rRNA binding proteins. Required for association of the 30S and 50S subunits to form the 70S ribosome, for tRNA binding and peptide bond formation. It has been suggested to have peptidyltransferase activity; this is somewhat controversial. Makes several contacts with the 16S rRNA in the 70S ribosome. In Spiroplasma kunkelii, this protein is Large ribosomal subunit protein uL2.